Consider the following 391-residue polypeptide: Mannonate dehydratase (391 aa).

The disordered stretch occupies residues 334-359 (ERRRERDGGPRLPLRPDHGHHLLDDL).

This sequence belongs to the mannonate dehydratase family. The cofactor is Fe(2+). It depends on Mn(2+) as a cofactor.

It catalyses the reaction D-mannonate = 2-dehydro-3-deoxy-D-gluconate + H2O. The protein operates within carbohydrate metabolism; pentose and glucuronate interconversion. Its function is as follows. Catalyzes the dehydration of D-mannonate. The protein is Mannonate dehydratase of Chromohalobacter salexigens (strain ATCC BAA-138 / DSM 3043 / CIP 106854 / NCIMB 13768 / 1H11).